Consider the following 133-residue polypeptide: Ribosome-binding factor A (133 aa).

It belongs to the RbfA family. In terms of assembly, monomer. Binds 30S ribosomal subunits, but not 50S ribosomal subunits or 70S ribosomes.

It localises to the cytoplasm. Functionally, one of several proteins that assist in the late maturation steps of the functional core of the 30S ribosomal subunit. Associates with free 30S ribosomal subunits (but not with 30S subunits that are part of 70S ribosomes or polysomes). Required for efficient processing of 16S rRNA. May interact with the 5'-terminal helix region of 16S rRNA. In Nostoc sp. (strain PCC 7120 / SAG 25.82 / UTEX 2576), this protein is Ribosome-binding factor A.